A 968-amino-acid chain; its full sequence is Isoleucine--tRNA ligase (968 aa).

Positions 68 to 78 (PYANGALHMGH) match the 'HIGH' region motif. Glutamate 582 provides a ligand contact to L-isoleucyl-5'-AMP. The 'KMSKS' region motif lies at 623–627 (KMSKS). Residue lysine 626 coordinates ATP. 4 residues coordinate Zn(2+): cysteine 936, cysteine 939, cysteine 956, and cysteine 959.

The protein belongs to the class-I aminoacyl-tRNA synthetase family. IleS type 1 subfamily. Monomer. The cofactor is Zn(2+).

It is found in the cytoplasm. The enzyme catalyses tRNA(Ile) + L-isoleucine + ATP = L-isoleucyl-tRNA(Ile) + AMP + diphosphate. In terms of biological role, catalyzes the attachment of isoleucine to tRNA(Ile). As IleRS can inadvertently accommodate and process structurally similar amino acids such as valine, to avoid such errors it has two additional distinct tRNA(Ile)-dependent editing activities. One activity is designated as 'pretransfer' editing and involves the hydrolysis of activated Val-AMP. The other activity is designated 'posttransfer' editing and involves deacylation of mischarged Val-tRNA(Ile). This Prochlorococcus marinus (strain MIT 9301) protein is Isoleucine--tRNA ligase.